Consider the following 169-residue polypeptide: Ribosome-binding factor A (169 aa).

Residues A124–K169 are disordered. Residues H128–I139 show a composition bias toward basic and acidic residues. Residues P140–K169 show a composition bias toward acidic residues.

It belongs to the RbfA family. As to quaternary structure, monomer. Binds 30S ribosomal subunits, but not 50S ribosomal subunits or 70S ribosomes.

Its subcellular location is the cytoplasm. In terms of biological role, one of several proteins that assist in the late maturation steps of the functional core of the 30S ribosomal subunit. Associates with free 30S ribosomal subunits (but not with 30S subunits that are part of 70S ribosomes or polysomes). Required for efficient processing of 16S rRNA. May interact with the 5'-terminal helix region of 16S rRNA. The protein is Ribosome-binding factor A of Arthrobacter sp. (strain FB24).